Consider the following 114-residue polypeptide: UPF0102 protein Amet_2739 (114 aa).

This sequence belongs to the UPF0102 family.

The sequence is that of UPF0102 protein Amet_2739 from Alkaliphilus metalliredigens (strain QYMF).